The chain runs to 192 residues: Adenylate kinase (192 aa).

10 to 15 is a binding site for ATP; sequence GAGKGT. Residues 30 to 59 are NMP; it reads STGDMLREVIRRETEIGKKAKAMINAGTLV. Residues T31, R36, 57-59, 85-88, and Q92 contribute to the AMP site; these read TLV and GYPR. Residues 126–142 are LID; that stretch reads KRVQETIIAGGQVRSDD. Residue R127 coordinates ATP. Positions 139 and 150 each coordinate AMP. I178 is a binding site for ATP.

The protein belongs to the adenylate kinase family. Monomer.

It localises to the cytoplasm. The enzyme catalyses AMP + ATP = 2 ADP. The protein operates within purine metabolism; AMP biosynthesis via salvage pathway; AMP from ADP: step 1/1. Functionally, catalyzes the reversible transfer of the terminal phosphate group between ATP and AMP. Plays an important role in cellular energy homeostasis and in adenine nucleotide metabolism. The chain is Adenylate kinase from Bartonella henselae (strain ATCC 49882 / DSM 28221 / CCUG 30454 / Houston 1) (Rochalimaea henselae).